The primary structure comprises 188 residues: UPF0200 protein M1627_1244 (188 aa).

15-22 (GMPGSGKS) contributes to the ATP binding site.

The protein belongs to the UPF0200 family.

This is UPF0200 protein M1627_1244 from Saccharolobus islandicus (strain M.16.27) (Sulfolobus islandicus).